Reading from the N-terminus, the 319-residue chain is Taste receptor type 2 member 14 (319 aa).

Residues 1–7 (MDGVIKS) are Extracellular-facing. Residues 8–28 (IFTFILIVEFIIGNLGNSFIV) form a helical membrane-spanning segment. Over 29-55 (LVNCIDWVKRRKISLVDQILIALAISR) the chain is Cytoplasmic. A helical membrane pass occupies residues 56 to 76 (ISLVWSIFGSWCVSVFFPALF). The Extracellular segment spans residues 77 to 87 (ATEKLLRMLTN). T86 and W89 together coordinate cholesterol. A helical transmembrane segment spans residues 88 to 108 (IWTVTNHFSVWLATILGTFYF). Residues 109-129 (LKIANFSNSIFLYLKWRVKKV) are Cytoplasmic-facing. A helical membrane pass occupies residues 130–150 (VLVLLLVTLGLLFLNILLINI). Residues 151–184 (HINASINGYRGNMTCSSASCNFIRFSRAIALTST) lie on the Extracellular side of the membrane. Residues N153 and N162 are each glycosylated (N-linked (GlcNAc...) asparagine). Residue A180 participates in cholesterol binding. Residues 185–205 (VFVLIPFTLSLATSLLLSFSL) form a helical membrane-spanning segment. Over 206–233 (WKHHKKMQHTVKGYRDVSTKAHRGVMQT) the chain is Cytoplasmic. The chain crosses the membrane as a helical span at residues 234–254 (VITFLLLYAVFLLTFFISIWA). The Extracellular segment spans residues 255 to 263 (SVRLKENQI). The helical transmembrane segment at 264–284 (IILSEMMGLAYPSGHSCVLIL) threads the bilayer. Positions 267 and 270 each coordinate cholesterol. At 285-319 (GNKKLRQASLSVLWWLRYRFKHGEPSGHKEFRESS) the chain is on the cytoplasmic side.

It belongs to the G-protein coupled receptor T2R family. As to quaternary structure, core component of the TAS2R14-GNAI1 complex, consisting of TAS2R14, GNAI1, GNB1 and GNG2; within the complex interacts with GNAI1. Core component of the TAS2R14-GNAT3 complex, consisting of TAS2R14, GNAT3, GNB1 and GNG2; within the complex interacts with GNAT3. Core component of the TAS2R14-GNAS2 complex, consisting of TAS2R14, GNAS2, GNB1 and GNG2; within the complex interacts with GNAS2.

It is found in the membrane. The catalysed reaction is Ca(2+)(in) = Ca(2+)(out). It catalyses the reaction 3',5'-cyclic AMP(in) = 3',5'-cyclic AMP(out). With respect to regulation, basal activity is enhanced by binding to bitter tastants, such as flufenamic acid and aristolochic acid. Regulated by cholesterol in a concentration-dependent manner. Functionally, gustducin-linked G-protein coupled receptor that plays a role in the perception of bitterness. The activity of this receptor stimulates GNAT3, activating the gustducin G-protein pathway. Likely plays a role in sensing the chemical composition of the gastrointestinal content and other extra-oral tissues via the inhibitory G-protein pathways. In Macaca mulatta (Rhesus macaque), this protein is Taste receptor type 2 member 14 (TAS2R14).